A 473-amino-acid chain; its full sequence is Cannabinoid receptor 1 (473 aa).

Residues 1–118 (MKSILDGLAD…CFMILNPSQQ (118 aa)) lie on the Extracellular side of the membrane. Positions 2-23 (KSILDGLADTTFRTITTDLLYV) are required for mitochondrial localization. Residues Asn-79 and Asn-85 are each glycosylated (N-linked (GlcNAc...) asparagine). Residues 119–144 (LAIAVLSLTLGTFTVLENLLVLCVIL) form a helical membrane-spanning segment. The Cytoplasmic segment spans residues 145–156 (HSRSLRCRPSYH). The chain crosses the membrane as a helical span at residues 157–177 (FIGSLAVADLLGSVIFVYSFV). The Extracellular segment spans residues 178 to 189 (DFHVFHRKDSPN). Residues 190–214 (VFLFKLGGVTASFTASVGSLFLTAI) traverse the membrane as a helical segment. Topologically, residues 215 to 234 (DRYISIHRPLAYKRIVTRPK) are cytoplasmic. A helical transmembrane segment spans residues 235–257 (AVVAFCVMWTIAIVIAVLPLLGW). Topologically, residues 258–275 (NCKKLNSVCSDIFPLIDE) are extracellular. A helical transmembrane segment spans residues 276 to 301 (TYLMFWIGVTSILLLFIVYAYMYILW). The Cytoplasmic segment spans residues 302–346 (KAHSHAVRMLQRGTQKSIIIQSTEDGKVQITRPDQTRMDIRLAKT). A helical transmembrane segment spans residues 347–367 (LVLILVVLIICWGPLLAIMVY). The Extracellular portion of the chain corresponds to 368 to 379 (DVFGKMNKLIKT). A helical membrane pass occupies residues 380-401 (IFAFCSMLCLLNSTVNPIIYAL). The Cytoplasmic segment spans residues 402–473 (RSKDLRHAFR…VSTDTTAEAL (72 aa)). The S-palmitoyl cysteine moiety is linked to residue Cys-417.

The protein belongs to the G-protein coupled receptor 1 family. Palmitoylation at Cys-417 is important for recruitment at both plasma membrane and lipid rafts and association with G protein alpha subunits.

Its subcellular location is the cell membrane. The protein resides in the mitochondrion outer membrane. It is found in the cell projection. The protein localises to the axon. It localises to the presynapse. Its function is as follows. G-protein coupled receptor for cannabinoids. Mediates many cannabinoid-induced effects in the central nervous system (CNS), as well as in peripheral tissues. Regulates cellular respiration and energy production in response to cannabinoids. Signaling typically involves reduction in cyclic AMP. The chain is Cannabinoid receptor 1 (CNR1) from Taeniopygia guttata (Zebra finch).